The chain runs to 1041 residues: Nuclear pore complex protein NUP98A (1041 aa).

Residues 1–34 (MFGSSNPFGQSSGTSPFGSQSLFGQTSNTSSNNP) are compositionally biased toward polar residues. Residues 1–44 (MFGSSNPFGQSSGTSPFGSQSLFGQTSNTSSNNPFAPATPFGTS) form a disordered region. A run of 44 repeats spans residues 2 to 3 (FG), 8 to 9 (FG), 17 to 18 (FG), 23 to 24 (FG), 41 to 42 (FG), 56 to 57 (FG), 64 to 65 (FG), 79 to 80 (FG), 87 to 88 (FG), 94 to 95 (FG), 103 to 104 (FG), 109 to 110 (FG), 124 to 125 (FG), 135 to 136 (FG), 140 to 141 (FG), 146 to 147 (FG), 154 to 155 (FG), 162 to 163 (FG), 170 to 171 (FG), 178 to 179 (FG), 186 to 187 (FG), 194 to 195 (FG), 202 to 203 (FG), 210 to 211 (FG), 217 to 218 (FG), 222 to 223 (FG), 228 to 229 (FG), 236 to 237 (FG), 244 to 245 (FG), 252 to 253 (FG), 260 to 261 (FG), 268 to 269 (FG), 276 to 277 (FG), 284 to 285 (FG), 294 to 295 (FG), 300 to 301 (FG), 307 to 308 (FG), 312 to 313 (FG), 319 to 320 (FG), 329 to 330 (FG), 334 to 335 (FG), 339 to 340 (FG), 411 to 412 (FG), and 427 to 428 (FG). A 65 X 2 AA repeats of F-G region spans residues 2–677 (FGSSNPFGQS…QPVAVTNPFG (676 aa)). A disordered region spans residues 98–171 (PASSPFGGSS…FGATSTPSFG (74 aa)). A compositionally biased stretch (polar residues) spans 117–171 (STPQSNPFGNSTQQSQPAFGNTSFGSSTPFGATNTPAFGAPSTPSFGATSTPSFG). Disordered regions lie at residues 315–347 (TPSP…GGSR) and 392–447 (QRGD…TNPF). Positions 430–447 (TSANPTNPFSSSTSTNPF) are enriched in low complexity. Repeat copies occupy residues 459 to 460 (FG), 466 to 467 (FG), 471 to 472 (FG), 480 to 481 (FG), 491 to 492 (FG), 497 to 498 (FG), 506 to 507 (FG), 514 to 515 (FG), 521 to 522 (FG), 533 to 534 (FG), 555 to 556 (FG), 562 to 563 (FG), 565 to 566 (FG), 573 to 574 (FG), 586 to 587 (FG), 604 to 605 (FG), 627 to 628 (FG), 632 to 633 (FG), 650 to 651 (FG), 655 to 656 (FG), and 676 to 677 (FG). The segment covering 517-526 (SSSIFGSAPG) has biased composition (low complexity). Residues 517–560 (SSSIFGSAPGQGATPAFGNSQPSTLFNSTPSTGQTGSAFGQTGS) form a disordered region. The segment covering 533-560 (FGNSQPSTLFNSTPSTGQTGSAFGQTGS) has biased composition (polar residues). The interval 734–860 (KYRPGENGPK…KERPYKTLSG (127 aa)) is disordered. The segment covering 782-793 (SRDKSILPKEQR) has biased composition (basic and acidic residues). Residues 831–846 (TSVNANQKPNGTTRSD) are compositionally biased toward polar residues. One can recognise a Peptidase S59 domain in the interval 885 to 1027 (QSDYFTEPRI…GEWKFRVEHF (143 aa)).

The protein belongs to the nucleoporin GLFG family. Part of the nuclear pore complex (NPC). The NPC has an eight-fold symmetrical structure comprising a central transport channel and two rings, the cytoplasmic and nuclear rings, to which eight filaments are attached. The cytoplasmic filaments have loose ends, while the nuclear filaments are joined in a distal ring, forming a nuclear basket. NPCs are highly dynamic in configuration and composition, and can be devided in 3 subcomplexes, the NUP62 subcomplex, the NUP107-160 subcomplex and the NUP93 subcomplex, containing approximately 30 different nucleoporin proteins.

It is found in the nucleus. Its subcellular location is the nuclear pore complex. This chain is Nuclear pore complex protein NUP98A, found in Arabidopsis thaliana (Mouse-ear cress).